We begin with the raw amino-acid sequence, 224 residues long: Toxin coregulated pilin (224 aa).

The propeptide at 1–25 (MQLLKQLFKKKFVKEEHDKKTGQEG) is atypical leader sequence. Residue Met-26 is modified to N-methylmethionine. Residues 26–46 (MTLLEVIIVLGIMGVVSAGVV) traverse the membrane as a helical segment. The cysteines at positions 145 and 211 are disulfide-linked.

It localises to the fimbrium. Its subcellular location is the membrane. Functionally, major component of the toxin co-regulated pilus (tcp) which is a type IV pilus essential for bacterial aggregation and subsequent colonization in the host small intestine. The sequence is that of Toxin coregulated pilin (tcpA) from Vibrio cholerae serotype O1 (strain ATCC 39315 / El Tor Inaba N16961).